The chain runs to 120 residues: MDKVYVEGMEFYGYHGVFTEENKLGQRFKVDLTAELDLSKAGQTDDLEQTINYAELYHVCKDIVEGEPVKLVETLAERIAGTVLGKFQPVQQCTVKVIKPDPPIPGHYKSVAIEITRKKS.

Substrate-binding positions include Glu-21, Tyr-53, and 72-73 (VE). The Proton donor/acceptor role is filled by Lys-99.

The protein belongs to the DHNA family.

The catalysed reaction is 7,8-dihydroneopterin = 6-hydroxymethyl-7,8-dihydropterin + glycolaldehyde. The protein operates within cofactor biosynthesis; tetrahydrofolate biosynthesis; 2-amino-4-hydroxy-6-hydroxymethyl-7,8-dihydropteridine diphosphate from 7,8-dihydroneopterin triphosphate: step 3/4. In terms of biological role, catalyzes the conversion of 7,8-dihydroneopterin to 6-hydroxymethyl-7,8-dihydropterin. This Bacillus subtilis (strain 168) protein is Dihydroneopterin aldolase (folB).